Consider the following 349-residue polypeptide: Aspartate carbamoyltransferase catalytic subunit (349 aa).

Residues Arg59 and Thr60 each coordinate carbamoyl phosphate. Position 87 (Lys87) interacts with L-aspartate. 3 residues coordinate carbamoyl phosphate: Arg109, His142, and Gln145. L-aspartate-binding residues include Arg182 and Arg253. Residues Gly294 and Pro295 each contribute to the carbamoyl phosphate site.

This sequence belongs to the aspartate/ornithine carbamoyltransferase superfamily. ATCase family. Heterododecamer (2C3:3R2) of six catalytic PyrB chains organized as two trimers (C3), and six regulatory PyrI chains organized as three dimers (R2).

It catalyses the reaction carbamoyl phosphate + L-aspartate = N-carbamoyl-L-aspartate + phosphate + H(+). It functions in the pathway pyrimidine metabolism; UMP biosynthesis via de novo pathway; (S)-dihydroorotate from bicarbonate: step 2/3. Its function is as follows. Catalyzes the condensation of carbamoyl phosphate and aspartate to form carbamoyl aspartate and inorganic phosphate, the committed step in the de novo pyrimidine nucleotide biosynthesis pathway. The polypeptide is Aspartate carbamoyltransferase catalytic subunit (Synechococcus sp. (strain CC9902)).